Consider the following 528-residue polypeptide: Calcium-dependent protein kinase 17 (528 aa).

Residues 1–65 form a disordered region; that stretch reads MGNCCSHGRD…GPIGPVLGRP (65 aa). Gly2 carries N-myristoyl glycine lipidation. The segment covering 20 to 45 has biased composition (low complexity); that stretch reads NGASASNAANSTGPTAEASVPQSKHA. Positions 73-331 constitute a Protein kinase domain; sequence YSLGKELGRG…AAQVLNHPWI (259 aa). ATP is bound by residues 79–87 and Lys102; that span reads LGRGQFGVT. Asp197 acts as the Proton acceptor in catalysis. Ser237 is modified (phosphoserine). The segment at 337–367 is autoinhibitory domain; it reads APDVPLDNAVMSRLKQFKAMNNFKKVALRVI. EF-hand domains follow at residues 374–409, 410–445, 446–481, and 485–516; these read EEIMGLKEMFKGMDTDSSGTITLEELRQGLAKQGTR, LSEYEVQQLMEAADADGNGTIDYGEFIAATMHINRL, DREEHLYSAFQHFDKDNSGYITMEELEQALREFGMN, and DIKEIISEVDGDNDGRINYDEFVAMMRKGNPD. Residues Asp387, Asp389, Ser391, Thr393, Glu398, Asp423, Asp425, Asn427, Thr429, Glu434, Asp459, Asp461, Ser463, Tyr465, Glu470, Asp494, Asp496, Asp498, Arg500, and Glu505 each contribute to the Ca(2+) site.

The protein belongs to the protein kinase superfamily. Ser/Thr protein kinase family. CDPK subfamily.

It localises to the membrane. It catalyses the reaction L-seryl-[protein] + ATP = O-phospho-L-seryl-[protein] + ADP + H(+). It carries out the reaction L-threonyl-[protein] + ATP = O-phospho-L-threonyl-[protein] + ADP + H(+). Activated by calcium. Autophosphorylation may play an important role in the regulation of the kinase activity. Its function is as follows. May play a role in signal transduction pathways that involve calcium as a second messenger. The polypeptide is Calcium-dependent protein kinase 17 (CPK17) (Arabidopsis thaliana (Mouse-ear cress)).